The following is a 599-amino-acid chain: Aspartate--tRNA(Asp/Asn) ligase (599 aa).

L-aspartate is bound at residue E180. Residues Q204–K207 are aspartate. R226 contributes to the L-aspartate binding site. ATP-binding positions include R226–E228 and Q235. H457 is an L-aspartate binding site. E491 lines the ATP pocket. Position 498 (R498) interacts with L-aspartate. Residue G543–R546 coordinates ATP. A disordered region spans residues K565–N599. The segment covering V590–N599 has biased composition (acidic residues).

The protein belongs to the class-II aminoacyl-tRNA synthetase family. Type 1 subfamily. In terms of assembly, homodimer.

The protein resides in the cytoplasm. It carries out the reaction tRNA(Asx) + L-aspartate + ATP = L-aspartyl-tRNA(Asx) + AMP + diphosphate. Aspartyl-tRNA synthetase with relaxed tRNA specificity since it is able to aspartylate not only its cognate tRNA(Asp) but also tRNA(Asn). Reaction proceeds in two steps: L-aspartate is first activated by ATP to form Asp-AMP and then transferred to the acceptor end of tRNA(Asp/Asn). The sequence is that of Aspartate--tRNA(Asp/Asn) ligase from Bifidobacterium longum (strain NCC 2705).